The chain runs to 1036 residues: Isoleucine--tRNA ligase (1036 aa).

The 'HIGH' region signature appears at 48–58; sequence PTANGKPHVGH. The 'KMSKS' region signature appears at 590–594; it reads KMSKS. Position 593 (Lys593) interacts with ATP.

Belongs to the class-I aminoacyl-tRNA synthetase family. IleS type 2 subfamily. Monomer. It depends on Zn(2+) as a cofactor.

It localises to the cytoplasm. The enzyme catalyses tRNA(Ile) + L-isoleucine + ATP = L-isoleucyl-tRNA(Ile) + AMP + diphosphate. In terms of biological role, catalyzes the attachment of isoleucine to tRNA(Ile). As IleRS can inadvertently accommodate and process structurally similar amino acids such as valine, to avoid such errors it has two additional distinct tRNA(Ile)-dependent editing activities. One activity is designated as 'pretransfer' editing and involves the hydrolysis of activated Val-AMP. The other activity is designated 'posttransfer' editing and involves deacylation of mischarged Val-tRNA(Ile). The polypeptide is Isoleucine--tRNA ligase (Clostridium tetani (strain Massachusetts / E88)).